The following is a 283-amino-acid chain: DNA repair protein RecO (283 aa).

Over residues 254–264 the composition is skewed to polar residues; it reads SSPASVGSSAT. Residues 254 to 283 are disordered; it reads SSPASVGSSATRYFAQGDTDENDRDPPGAR.

This sequence belongs to the RecO family.

Functionally, involved in DNA repair and RecF pathway recombination. In Roseiflexus sp. (strain RS-1), this protein is DNA repair protein RecO.